Reading from the N-terminus, the 286-residue chain is Phosphatidylserine decarboxylase proenzyme (286 aa).

Active-site charge relay system; for autoendoproteolytic cleavage activity residues include Asp90, His147, and Ser252. The active-site Schiff-base intermediate with substrate; via pyruvic acid; for decarboxylase activity is the Ser252. Ser252 is modified (pyruvic acid (Ser); by autocatalysis).

Belongs to the phosphatidylserine decarboxylase family. PSD-B subfamily. Prokaryotic type I sub-subfamily. Heterodimer of a large membrane-associated beta subunit and a small pyruvoyl-containing alpha subunit. Pyruvate is required as a cofactor. Is synthesized initially as an inactive proenzyme. Formation of the active enzyme involves a self-maturation process in which the active site pyruvoyl group is generated from an internal serine residue via an autocatalytic post-translational modification. Two non-identical subunits are generated from the proenzyme in this reaction, and the pyruvate is formed at the N-terminus of the alpha chain, which is derived from the carboxyl end of the proenzyme. The autoendoproteolytic cleavage occurs by a canonical serine protease mechanism, in which the side chain hydroxyl group of the serine supplies its oxygen atom to form the C-terminus of the beta chain, while the remainder of the serine residue undergoes an oxidative deamination to produce ammonia and the pyruvoyl prosthetic group on the alpha chain. During this reaction, the Ser that is part of the protease active site of the proenzyme becomes the pyruvoyl prosthetic group, which constitutes an essential element of the active site of the mature decarboxylase.

The protein resides in the cell membrane. It catalyses the reaction a 1,2-diacyl-sn-glycero-3-phospho-L-serine + H(+) = a 1,2-diacyl-sn-glycero-3-phosphoethanolamine + CO2. It functions in the pathway phospholipid metabolism; phosphatidylethanolamine biosynthesis; phosphatidylethanolamine from CDP-diacylglycerol: step 2/2. Its function is as follows. Catalyzes the formation of phosphatidylethanolamine (PtdEtn) from phosphatidylserine (PtdSer). This is Phosphatidylserine decarboxylase proenzyme from Pseudomonas fluorescens (strain Pf0-1).